Reading from the N-terminus, the 251-residue chain is 3-deoxy-manno-octulosonate cytidylyltransferase (251 aa).

Belongs to the KdsB family.

The protein localises to the cytoplasm. The enzyme catalyses 3-deoxy-alpha-D-manno-oct-2-ulosonate + CTP = CMP-3-deoxy-beta-D-manno-octulosonate + diphosphate. The protein operates within nucleotide-sugar biosynthesis; CMP-3-deoxy-D-manno-octulosonate biosynthesis; CMP-3-deoxy-D-manno-octulosonate from 3-deoxy-D-manno-octulosonate and CTP: step 1/1. It participates in bacterial outer membrane biogenesis; lipopolysaccharide biosynthesis. Its function is as follows. Activates KDO (a required 8-carbon sugar) for incorporation into bacterial lipopolysaccharide in Gram-negative bacteria. In Chromobacterium violaceum (strain ATCC 12472 / DSM 30191 / JCM 1249 / CCUG 213 / NBRC 12614 / NCIMB 9131 / NCTC 9757 / MK), this protein is 3-deoxy-manno-octulosonate cytidylyltransferase.